Here is a 288-residue protein sequence, read N- to C-terminus: MTHQYPPFYGVYLLQSTKKPLSCYVGSTPNPFRRIRQHNGDLKAGGAWRTKRAHLRPWSMVLIVNGFPSKISALKFEHALQHPNMTRLITTKDIKRKVPQKARALGTHLAFIRLLVRCSYFRRMHLRITFFRSHAHEAWEKNDYDVGSLPPQFQVETDYPSDEAEAPPSTVGSGELDINNRSIEEYLQKCRDAVSNDKQLTCYLSEKTLNISEGNVALCHNCDGAFDVAELAERFLNEEIPEELPFTTPSRHIIPIGGDCPSCLARMEWSNVIKGVLAMRPVLEDNKE.

The GIY-YIG domain maps to proline 7–threonine 90.

The protein belongs to the SLX1 family. In terms of assembly, forms a heterodimer with SLX4. A divalent metal cation serves as cofactor.

The protein localises to the nucleus. Functionally, catalytic subunit of the SLX1-SLX4 structure-specific endonuclease that resolves DNA secondary structures generated during DNA repair and recombination. Has endonuclease activity towards branched DNA substrates, introducing single-strand cuts in duplex DNA close to junctions with ss-DNA. The protein is Structure-specific endonuclease subunit SLX1 of Yarrowia lipolytica (strain CLIB 122 / E 150) (Yeast).